We begin with the raw amino-acid sequence, 1067 residues long: UPF0507 protein KLLA0D01133g (1067 aa).

Positions 280–432 (IVEDQELEHR…FHQDTVDSLT (153 aa)) constitute a VPS9 domain.

It belongs to the UPF0507 family.

This chain is UPF0507 protein KLLA0D01133g, found in Kluyveromyces lactis (strain ATCC 8585 / CBS 2359 / DSM 70799 / NBRC 1267 / NRRL Y-1140 / WM37) (Yeast).